Reading from the N-terminus, the 441-residue chain is Mitochondrial distribution and morphology protein 12 (441 aa).

The SMP-LTD domain maps to 1 to 441 (MSIDIDWERA…VYPSFWTFLV (441 aa)). Disordered stretches follow at residues 70 to 89 (YEDG…PMRE) and 180 to 289 (TPLR…RMRE). Composition is skewed to polar residues over residues 226 to 245 (SRPS…SVST) and 253 to 263 (SSQTVLANNPG).

This sequence belongs to the MDM12 family. Component of the ER-mitochondria encounter structure (ERMES) or MDM complex, composed of MMM1, MDM10, MDM12 and MDM34. An MMM1 homodimer associates with one molecule of MDM12 on each side in a pairwise head-to-tail manner, and the SMP-LTD domains of MMM1 and MDM12 generate a continuous hydrophobic tunnel for phospholipid trafficking.

It is found in the mitochondrion outer membrane. The protein resides in the endoplasmic reticulum membrane. Its function is as follows. Component of the ERMES/MDM complex, which serves as a molecular tether to connect the endoplasmic reticulum (ER) and mitochondria. Components of this complex are involved in the control of mitochondrial shape and protein biogenesis, and function in nonvesicular lipid trafficking between the ER and mitochondria. MDM12 is required for the interaction of the ER-resident membrane protein MMM1 and the outer mitochondrial membrane-resident beta-barrel protein MDM10. The MDM12-MMM1 subcomplex functions in the major beta-barrel assembly pathway that is responsible for biogenesis of all mitochondrial outer membrane beta-barrel proteins, and acts in a late step after the SAM complex. The MDM10-MDM12-MMM1 subcomplex further acts in the TOM40-specific pathway after the action of the MDM12-MMM1 complex. Essential for establishing and maintaining the structure of mitochondria and maintenance of mtDNA nucleoids. In Paracoccidioides brasiliensis (strain Pb03), this protein is Mitochondrial distribution and morphology protein 12.